We begin with the raw amino-acid sequence, 237 residues long: Pheromone-regulated membrane protein 8 (237 aa).

The Cytoplasmic segment spans residues 1–47 (MQTPSENTNAKSDSLDEPGAYLIEENVALPKDIFHSYLSYWIYEAAH). A helical transmembrane segment spans residues 48–68 (CTPVMLLSLVIGVLISIIILF). Topologically, residues 69 to 74 (HDNENC) are extracellular. The chain crosses the membrane as a helical span at residues 75 to 95 (VGVSVGFLLIFSGILVIVLIL). Over 96 to 237 (RFGPQISDED…QEYPGVDEFF (142 aa)) the chain is Cytoplasmic. A disordered region spans residues 174-201 (SSASNVKDAQSNDETAGTPNEAAESSSF). Residues 236–237 (FF) form a COPII binding region.

It belongs to the DUP/COS family. As to quaternary structure, interacts with PRM9. Binds to SEC23/24 of COPII coated vesicles.

The protein localises to the membrane. Its subcellular location is the endoplasmic reticulum. In terms of biological role, may be involved in endoplasmic reticulum exit trafficking of proteins. In Saccharomyces cerevisiae (strain ATCC 204508 / S288c) (Baker's yeast), this protein is Pheromone-regulated membrane protein 8 (PRM8).